Consider the following 515-residue polypeptide: Pisatin demethylase (515 aa).

Cys-453 contributes to the heme binding site.

This sequence belongs to the cytochrome P450 family. Requires heme as cofactor.

In terms of biological role, can detoxify the phytoalexin pisatin from garden pea. Pisatin is an antimicrobial compound produced by pea in response to infection by plant pathogens. In Fusarium vanettenii (Neocosmospora pisi), this protein is Pisatin demethylase (PDAT9).